Reading from the N-terminus, the 739-residue chain is Sulfate transporter (739 aa).

Composition is skewed to basic and acidic residues over residues 1 to 17 and 31 to 46; these read MSSENKEQHDLSPRDLP and TQRRSGTDLRQSETGH. The disordered stretch occupies residues 1–47; it reads MSSENKEQHDLSPRDLPEEAFGFPSELPLETQRRSGTDLRQSETGHG. A Phosphoserine modification is found at Ser12. 2 consecutive transmembrane segments (helical) span residues 112 to 132 and 137 to 157; these read VMSGLIVGILLVPQSIAYSLL and PIYGLYTSFFASIIYFLFGTS. Asn205 carries N-linked (GlcNAc...) asparagine glycosylation. The next 2 membrane-spanning stretches (helical) occupy residues 227 to 247 and 255 to 275; these read FMAGVYQVAMGFFQVGFVSVY and GFVTGASFTILTSQAKYLLGL. The N-linked (GlcNAc...) asparagine glycan is linked to Asn357. 4 helical membrane passes run 378–398, 420–440, 455–475, and 524–544; these read LIPNVAVDAIAISIIGFAITV, AIGFCNIIPSFFHCITTSAAL, LSAIVTALVLLLVLLVIAPLF, and LLSTEIGLLVGVCFSMFCVIL. An STAS domain is found at 568–719; the sequence is TYKNLRSKSG…YSLSEAVAFA (152 aa).

The protein belongs to the SLC26A/SulP transporter (TC 2.A.53) family. Post-translationally, N-glycosylated. In terms of tissue distribution, distributed mainly in the thymus, testis and osteoblastic cells. Highly expressed in the bone, cartilage, kidney and colon.

The protein localises to the cell membrane. It localises to the apical cell membrane. It carries out the reaction oxalate(in) + sulfate(out) = oxalate(out) + sulfate(in). The catalysed reaction is sulfate(out) + 2 chloride(in) = sulfate(in) + 2 chloride(out). It catalyses the reaction oxalate(out) + 2 chloride(in) = oxalate(in) + 2 chloride(out). The enzyme catalyses bromide(in) + chloride(out) = bromide(out) + chloride(in). It carries out the reaction nitrate(in) + chloride(out) = nitrate(out) + chloride(in). The catalysed reaction is iodide(in) + chloride(out) = iodide(out) + chloride(in). Functionally, sulfate transporter which mediates sulfate uptake into chondrocytes in order to maintain adequate sulfation of proteoglycans which is needed for cartilage development. Mediates electroneutral anion exchange of sulfate ions for oxalate ions, sulfate and oxalate ions for chloride and/or hydroxyl ions and chloride ions for bromide, iodide and nitrate ions. The coupling of sulfate transport to both hydroxyl and chloride ions likely serves to ensure transport at both acidic pH when most sulfate uptake is mediated by sulfate-hydroxide exchange and alkaline pH when most sulfate uptake is mediated by sulfate-chloride exchange. Essential for chondrocyte proliferation, differentiation and cell size expansion. The polypeptide is Sulfate transporter (Slc26a2) (Mus musculus (Mouse)).